The following is a 188-amino-acid chain: Mitochondrial import inner membrane translocase subunit Tim23B (188 aa).

2 helical membrane-spanning segments follow: residues 73–93 (FELA…FGAM) and 125–145 (ALWA…GVII).

Belongs to the Tim17/Tim22/Tim23 family.

It is found in the mitochondrion inner membrane. In terms of biological role, may participate in the translocation of transit peptide-containing proteins across the mitochondrial inner membrane. the PAM complex. The sequence is that of Mitochondrial import inner membrane translocase subunit Tim23B from Homo sapiens (Human).